Reading from the N-terminus, the 173-residue chain is Glycine cleavage system H protein, mitochondrial (173 aa).

Residues 1 to 48 (MALRAVRSVRAAVGGLRAISAPSAPCLPRPWGLRAGAVRELRTGPALL) constitute a mitochondrion transit peptide. In terms of domain architecture, Lipoyl-binding spans 66–148 (VGTVGISNFA…YEDGWLIKMT (83 aa)). Lys-107 carries the post-translational modification N6-lipoyllysine.

It belongs to the GcvH family. Interacts with GLDC. The glycine cleavage system is composed of four proteins: P (GLDC), T (GCST), L (DLD) and H (GCSH). The cofactor is (R)-lipoate.

The protein localises to the mitochondrion. Functionally, the glycine cleavage system catalyzes the degradation of glycine. The H protein (GCSH) shuttles the methylamine group of glycine from the P protein (GLDC) to the T protein (GCST). Has a pivotal role in the lipoylation of enzymes involved in cellular energetics such as the mitochondrial dihydrolipoyllysine-residue acetyltransferase component of pyruvate dehydrogenase complex (DLAT), and the mitochondrial dihydrolipoyllysine-residue succinyltransferase component of 2-oxoglutarate dehydrogenase complex (DLST). The protein is Glycine cleavage system H protein, mitochondrial of Bos taurus (Bovine).